A 276-amino-acid chain; its full sequence is MRAKQREIIDALKVKPTIDPATEIRRSVDFLKAYLQRYDFMKTLVLGISGGQDSTLTGLLCEQAVTELRQETGDNDYRFIAVRLPYGEQADEDDAMMAIDFMDADEVQRVNIKPATDAMIQAVETSGKPISDFNKGNVKARQRMIAQYAIAGARSGAVVGTDHAAEAVTGFYTKYGDGATDICPIWRLDKRQGAAMLAQLGAPEHLYKKVPTADLEDDRPALPDEAALGVRYEDIDDYLEGRSVSEAAASRIEDWYAKTAHKRHLPVNVYDTFWQE.

47–54 (GISGGQDS) lines the ATP pocket. Asp-53 is a binding site for Mg(2+). Arg-141 is a deamido-NAD(+) binding site. Thr-161 lines the ATP pocket. Glu-166 contacts Mg(2+). Deamido-NAD(+) is bound by residues Lys-174 and Asp-181. 2 residues coordinate ATP: Lys-190 and Thr-212. 261–262 (HK) contacts deamido-NAD(+).

Belongs to the NAD synthetase family. In terms of assembly, homodimer.

It carries out the reaction deamido-NAD(+) + NH4(+) + ATP = AMP + diphosphate + NAD(+) + H(+). It participates in cofactor biosynthesis; NAD(+) biosynthesis; NAD(+) from deamido-NAD(+) (ammonia route): step 1/1. Its function is as follows. Catalyzes the ATP-dependent amidation of deamido-NAD to form NAD. Uses ammonia as a nitrogen source. The sequence is that of NH(3)-dependent NAD(+) synthetase from Levilactobacillus brevis (strain ATCC 367 / BCRC 12310 / CIP 105137 / JCM 1170 / LMG 11437 / NCIMB 947 / NCTC 947) (Lactobacillus brevis).